The following is a 96-amino-acid chain: Beta-defensin 20 (96 aa).

A signal peptide spans 1 to 21; that stretch reads MKLLQVLLVLLFVALADGAQP. 3 cysteine pairs are disulfide-bonded: Cys-24-Cys-52, Cys-32-Cys-46, and Cys-36-Cys-53.

The protein belongs to the beta-defensin family.

It is found in the secreted. In terms of biological role, has antibacterial activity. The chain is Beta-defensin 20 (Defb20) from Mus musculus (Mouse).